Consider the following 291-residue polypeptide: ATP synthase gamma chain (291 aa).

It belongs to the ATPase gamma chain family. In terms of assembly, F-type ATPases have 2 components, CF(1) - the catalytic core - and CF(0) - the membrane proton channel. CF(1) has five subunits: alpha(3), beta(3), gamma(1), delta(1), epsilon(1). CF(0) has three main subunits: a, b and c.

The protein localises to the cell inner membrane. Functionally, produces ATP from ADP in the presence of a proton gradient across the membrane. The gamma chain is believed to be important in regulating ATPase activity and the flow of protons through the CF(0) complex. In Chlorobium phaeobacteroides (strain DSM 266 / SMG 266 / 2430), this protein is ATP synthase gamma chain.